The sequence spans 778 residues: MNKHSFNVLEFDKLKELILANIVIDHNREVIENLEPYKDLSALNNELKTVKDFMDLLSFDGGFEAIGLRNINSLMEKIKLIGTYLEVEELWNINVNLRTVRIFKSRLDELGKYKQLREMIGNIPNLRVIEDVINKTINPEKEIKDDASLDLRDIRLHKKTLNMNIKRKFEELFEEPSLSNAFQEKIITERDGRMVTPVKYDFKGLIKGIEHDRSSSGQTVFIEPLSIVSLNNKMRELETKEKEEIRKILLRIAELLRNNKDDILIIGEKVMYLDILNAKSIYAVENRCEIPTVSNKEILSLEKARHPFIDKDKVTPLTFEIGKDYDILLITGPNTGGKTVALKTAGLLTLMALSGIPIPASENSKIGFFEGVFADIGDEQSIEQSLSSFSAHLKNVKEILEAVTKNSLVLLDELGSGTDPIEGAAFAMAVIDYLNEKKCKSFITTHYSQVKAYGYNEEGIETASMEFNTDTLSPTYRLLVGIPGESNALTIAQRMGLPESIISKAREYISEDNKKVEKMIENIKTKSQELDEMRERFARLQEEARLDRERAKQETLIIEKQKNEIIKSAYEEAEKMMNEMRAKASALVEKIQHEEKNKEDAKQIQKNLNMLSTALREEKNKTVEVVKKIKTKVNFKVGDRVFVKSINQFANILKINTSKESAMVQSGILKLEVPFDEIKIVEEKKEKVYNVNNHKKTPVRSEIDLRGKMVDEAVYELETYLDRATLNGYTEVYVIHGKGTGALREGILKYLKACKYVKEYRIGGHGEGGLGCTVVTLK.

332–339 provides a ligand contact to ATP; that stretch reads GPNTGGKT. One can recognise a Smr domain in the interval 703–778; sequence IDLRGKMVDE…GLGCTVVTLK (76 aa).

This sequence belongs to the DNA mismatch repair MutS family. MutS2 subfamily. As to quaternary structure, homodimer. Binds to stalled ribosomes, contacting rRNA.

Functionally, endonuclease that is involved in the suppression of homologous recombination and thus may have a key role in the control of bacterial genetic diversity. Its function is as follows. Acts as a ribosome collision sensor, splitting the ribosome into its 2 subunits. Detects stalled/collided 70S ribosomes which it binds and splits by an ATP-hydrolysis driven conformational change. Acts upstream of the ribosome quality control system (RQC), a ribosome-associated complex that mediates the extraction of incompletely synthesized nascent chains from stalled ribosomes and their subsequent degradation. Probably generates substrates for RQC. In Fusobacterium nucleatum subsp. nucleatum (strain ATCC 25586 / DSM 15643 / BCRC 10681 / CIP 101130 / JCM 8532 / KCTC 2640 / LMG 13131 / VPI 4355), this protein is Endonuclease MutS2.